A 646-amino-acid polypeptide reads, in one-letter code: Hypoxia up-regulated protein 1 (646 aa).

An N-terminal signal peptide occupies residues 1 to 22; the sequence is MRPLVCVLWMFLFALLSSHTES. The disordered stretch occupies residues 572–646; it reads LFGGGSSVSE…KEEEKAEPQE (75 aa). Acidic residues predominate over residues 590 to 610; sequence VQEEDEVPTEPTKEEEQESAD. Over residues 611–646 the composition is skewed to basic and acidic residues; that stretch reads PADKQQDKENNKEKGTSATNEKEEGKKEEEKAEPQE.

Belongs to the heat shock protein 70 family.

Its subcellular location is the endoplasmic reticulum lumen. In terms of biological role, has a pivotal role in cytoprotective cellular mechanisms triggered by oxygen deprivation. May play a role as a molecular chaperone and participate in protein folding. The polypeptide is Hypoxia up-regulated protein 1 (hyou1) (Xenopus laevis (African clawed frog)).